The primary structure comprises 476 residues: MKKRQDKIRQMVPSMRRVHQIHFVGIGGAGMGGIAEVLLNEGYDITGSDIAENAVTGRLSSLGGKIFIGHAATNVENASVVVVSSAIKPDNVEVVAAHEKRIPVIQRAQMLAELMRFRHGIAIAGTHGKTTTTAMISMIYTQAGLDPTFVNGGLVKSAGTNAYLGASRYLIAEADESDASFLHLQPMVSVVTNIEPDHMDTYHGDFDEMKRTYVNFLHNLPFYGLAVMCADDAVLMELVPQVGRQVITYGFSEKADYRIENYEQTGFQGHYDVITPAGERIHILLNVPGKHNALNATAALVVAKEEGIGNDAILAALADFQGAGRRFDQLGEFIRPNGKVMLVDDYGHHPTEVGVTIQAARSGWENRRVVMVFQPHRYSRTRDLFDDFVRVLSQVDVLILLDVYPAGEQPIAGADSRSLARSIRNLGKVDPIFVADHGQLPEVVDQIIQDGDLILAQGAGNVSRLSRNLVEHWTKA.

125–131 (GTHGKTT) is an ATP binding site.

It belongs to the MurCDEF family.

The protein localises to the cytoplasm. It catalyses the reaction UDP-N-acetyl-alpha-D-muramate + L-alanine + ATP = UDP-N-acetyl-alpha-D-muramoyl-L-alanine + ADP + phosphate + H(+). Its pathway is cell wall biogenesis; peptidoglycan biosynthesis. Its function is as follows. Cell wall formation. In Actinobacillus succinogenes (strain ATCC 55618 / DSM 22257 / CCUG 43843 / 130Z), this protein is UDP-N-acetylmuramate--L-alanine ligase.